The primary structure comprises 498 residues: ATP synthase subunit beta, chloroplastic (498 aa).

ATP is bound at residue 172 to 179 (GGAGVGKT).

It belongs to the ATPase alpha/beta chains family. In terms of assembly, F-type ATPases have 2 components, CF(1) - the catalytic core - and CF(0) - the membrane proton channel. CF(1) has five subunits: alpha(3), beta(3), gamma(1), delta(1), epsilon(1). CF(0) has four main subunits: a(1), b(1), b'(1) and c(9-12).

Its subcellular location is the plastid. The protein localises to the chloroplast thylakoid membrane. The enzyme catalyses ATP + H2O + 4 H(+)(in) = ADP + phosphate + 5 H(+)(out). Its function is as follows. Produces ATP from ADP in the presence of a proton gradient across the membrane. The catalytic sites are hosted primarily by the beta subunits. The protein is ATP synthase subunit beta, chloroplastic of Populus alba (White poplar).